A 71-amino-acid polypeptide reads, in one-letter code: SRY-related protein LG28 (71 aa).

A DNA-binding region (HMG box) is located at residues 1–68 (VKRPMNAFMV…KHMADYPDYK (68 aa)).

Its subcellular location is the nucleus. This is SRY-related protein LG28 from Eublepharis macularius (Leopard gecko).